The chain runs to 383 residues: Non-structural maintenance of chromosomes element 4 homolog B (383 aa).

Residues Met1–Asp22 are compositionally biased toward basic and acidic residues. 3 disordered regions span residues Met1 to Ile59, Met198 to Ser231, and Gln355 to Leu383. A compositionally biased stretch (basic residues) spans Arg201–Lys212. Residues Gln355–Glu372 are compositionally biased toward polar residues.

Belongs to the NSE4 family. As to quaternary structure, interacts with SMC5, SMC6A or SMC6B. The SMC5-SMC6 complex is composed of the SMC5 and SMC6 heterodimer attached via their hinge domain and from the non-SMC subunit NSE4A or NSE4B. Not expressed in seedlings, rosette leaves and floral buds.

Its subcellular location is the nucleus. Functionally, component of the SMC5-SMC6 complex, that promotes sister chromatid alignment after DNA damage and facilitates double-stranded DNA breaks (DSBs) repair via homologous recombination between sister chromatids. The polypeptide is Non-structural maintenance of chromosomes element 4 homolog B (NSE4B) (Arabidopsis thaliana (Mouse-ear cress)).